We begin with the raw amino-acid sequence, 202 residues long: uncharacterized protein (202 aa).

A disordered region spans residues 178-202; the sequence is VCSSEDSEADRYSDYGWGGPSSPFN.

This is an uncharacterized protein from Homo sapiens (Human).